Consider the following 157-residue polypeptide: Sorting nexin-3 (157 aa).

A disordered region spans residues 1 to 21; it reads MSKPFQPISDVINTSPKNKSQ. The segment covering 11-21 has biased composition (polar residues); sequence VINTSPKNKSQ. The PX domain maps to 32–152; it reads NFLEIEVKNP…EFIQNEKWDP (121 aa). Positions 75, 77, 101, and 117 each coordinate a 1,2-diacyl-sn-glycero-3-phospho-(1D-myo-inositol-3-phosphate).

It belongs to the sorting nexin family.

Its subcellular location is the cytoplasm. The protein localises to the golgi apparatus membrane. It localises to the prevacuolar compartment membrane. Required for retention of late Golgi membrane proteins. Component of the retrieval machinery that functions by direct interaction with the cytosolic tails of certain TGN membrane proteins during the sorting/budding process at the prevacuolar compartment. Binds phosphatidylinositol 3-phosphate (PtdIns(P3)). The chain is Sorting nexin-3 (SNX3) from Candida albicans (strain SC5314 / ATCC MYA-2876) (Yeast).